Here is a 206-residue protein sequence, read N- to C-terminus: Large ribosomal subunit protein uL4 (206 aa).

Residues 44–80 (KRAGTHSVKTRSTISGGGAKPWRQKGTGRARSGSNRS) form a disordered region.

The protein belongs to the universal ribosomal protein uL4 family. As to quaternary structure, part of the 50S ribosomal subunit.

Its function is as follows. One of the primary rRNA binding proteins, this protein initially binds near the 5'-end of the 23S rRNA. It is important during the early stages of 50S assembly. It makes multiple contacts with different domains of the 23S rRNA in the assembled 50S subunit and ribosome. Functionally, forms part of the polypeptide exit tunnel. In Oleidesulfovibrio alaskensis (strain ATCC BAA-1058 / DSM 17464 / G20) (Desulfovibrio alaskensis), this protein is Large ribosomal subunit protein uL4.